We begin with the raw amino-acid sequence, 664 residues long: Putative membrane protein Bcell_0381 (664 aa).

Acidic residues predominate over residues 588–616 (DVTQDENGEEKSEEDNKEEIVEENTEEDN). A disordered region spans residues 588–622 (DVTQDENGEEKSEEDNKEEIVEENTEEDNKEEKTI). Residues 636–656 (YQFLLAGIIMLVGGSCIYVFY) traverse the membrane as a helical segment.

The protein resides in the cell membrane. This Evansella cellulosilytica (strain ATCC 21833 / DSM 2522 / FERM P-1141 / JCM 9156 / N-4) (Bacillus cellulosilyticus) protein is Putative membrane protein Bcell_0381.